We begin with the raw amino-acid sequence, 210 residues long: ATP-dependent Clp protease proteolytic subunit (210 aa).

Ser106 acts as the Nucleophile in catalysis. His131 is an active-site residue.

Belongs to the peptidase S14 family. Fourteen ClpP subunits assemble into 2 heptameric rings which stack back to back to give a disk-like structure with a central cavity, resembling the structure of eukaryotic proteasomes.

The protein resides in the cytoplasm. The catalysed reaction is Hydrolysis of proteins to small peptides in the presence of ATP and magnesium. alpha-casein is the usual test substrate. In the absence of ATP, only oligopeptides shorter than five residues are hydrolyzed (such as succinyl-Leu-Tyr-|-NHMec, and Leu-Tyr-Leu-|-Tyr-Trp, in which cleavage of the -Tyr-|-Leu- and -Tyr-|-Trp bonds also occurs).. Its function is as follows. Cleaves peptides in various proteins in a process that requires ATP hydrolysis. Has a chymotrypsin-like activity. Plays a major role in the degradation of misfolded proteins. The polypeptide is ATP-dependent Clp protease proteolytic subunit (Bartonella quintana (strain Toulouse) (Rochalimaea quintana)).